The primary structure comprises 367 residues: Folliculin-like protein bhd1 (367 aa).

Disordered regions lie at residues 41–75 (RSIGVTENGNDSPEAFKNELDNRNNADSQSLQSST) and 92–115 (SKGPESPRVNSFHNSYSRNQSPIS). Basic and acidic residues predominate over residues 54–64 (EAFKNELDNRN). Polar residues-rich tracts occupy residues 65–75 (NADSQSLQSST) and 99–115 (RVNSFHNSYSRNQSPIS). One can recognise a uDENN FLCN/SMCR8-type domain in the interval 131–302 (FSVPDVQPRL…SNIGTAPSYE (172 aa)).

The protein belongs to the folliculin family.

It is found in the nucleus. Its subcellular location is the cytoplasm. In Schizosaccharomyces pombe (strain 972 / ATCC 24843) (Fission yeast), this protein is Folliculin-like protein bhd1 (bhd1).